We begin with the raw amino-acid sequence, 62 residues long: Metallothionein (62 aa).

Met1 is subject to N-acetylmethionine. Residues 1–30 are beta; the sequence is MDPQDCKCETGASCSCGTTCSCSNCKCTSC. Residues Cys6, Cys8, Cys14, Cys16, Cys20, Cys22, Cys25, Cys27, Cys30, Cys34, Cys35, Cys37, Cys38, Cys42, Cys45, Cys49, Cys51, Cys58, Cys60, and Cys61 each coordinate a divalent metal cation. Residues 31 to 62 are alpha; it reads KKSCCSCCPAECSKCSQGCHCEKGSKKCSCCN.

The protein belongs to the metallothionein superfamily. Type 1 family.

Metallothioneins have a high content of cysteine residues that bind various heavy metals. This is Metallothionein (mt-a) from Xenopus laevis (African clawed frog).